Here is a 420-residue protein sequence, read N- to C-terminus: Vitellogenin-3 (420 aa).

An N-terminal signal peptide occupies residues 1 to 19 (MMSLRICLLATCLLVAAHA). T37 is subject to Phosphothreonine. Residues S177 and S178 each carry the phosphoserine modification. 2 positions are modified to sulfotyrosine: Y384 and Y390. The disordered stretch occupies residues 401–420 (GQRSPAHKQAAYHGMHHAQN).

It belongs to the AB hydrolase superfamily. Lipase family. Post-translationally, tyrosine sulfation occurs in the female only and plays an essential functional role. As to expression, synthesized in the fat body and ovarian follicle cells and accumulate in the oocyte.

It is found in the secreted. In terms of biological role, vitellogenin is the major yolk protein of eggs where it is used as a food source during embryogenesis. Vitellogenins and their receptor yl/yolkless are required for maintenance of microtubule plus-end orientation towards the posterior pole of oocytes. Involved in polarized localization of germ plasm components, such as osk mRNA and vas protein, to the oocyte posterior cortex. Receptor-mediated endocytosis by yl/yolkless is crucial for actin reorganization, mediated by osk isoform A/Long, required to anchor germ plasm components to the oocyte cortex. The polypeptide is Vitellogenin-3 (Yp3) (Drosophila melanogaster (Fruit fly)).